A 128-amino-acid polypeptide reads, in one-letter code: Fluoride-specific ion channel FluC (128 aa).

4 consecutive transmembrane segments (helical) span residues 4 to 24 (LLLV…VGVQ), 37 to 57 (TFIV…WLAL), 72 to 92 (VGVM…ALMI), and 101 to 121 (FTYT…GLLI). Na(+) is bound by residues Gly-76 and Thr-79.

It belongs to the fluoride channel Fluc/FEX (TC 1.A.43) family.

The protein resides in the cell inner membrane. It catalyses the reaction fluoride(in) = fluoride(out). Its activity is regulated as follows. Na(+) is not transported, but it plays an essential structural role and its presence is essential for fluoride channel function. Its function is as follows. Fluoride-specific ion channel. Important for reducing fluoride concentration in the cell, thus reducing its toxicity. This is Fluoride-specific ion channel FluC from Caulobacter sp. (strain K31).